The primary structure comprises 196 residues: Putative tyrosine-protein phosphatase OCA1 (196 aa).

The region spanning 33–192 (NFCPVEKQLY…SVQIDPTKMP (160 aa)) is the Tyrosine-protein phosphatase domain. C130 functions as the Phosphocysteine intermediate in the catalytic mechanism.

This sequence belongs to the protein-tyrosine phosphatase family.

It localises to the cytoplasm. The enzyme catalyses O-phospho-L-tyrosyl-[protein] + H2O = L-tyrosyl-[protein] + phosphate. Functionally, putative tyrosine-protein phosphatase required for protection against superoxide stress. The sequence is that of Putative tyrosine-protein phosphatase OCA1 (OCA1) from Debaryomyces hansenii (strain ATCC 36239 / CBS 767 / BCRC 21394 / JCM 1990 / NBRC 0083 / IGC 2968) (Yeast).